The primary structure comprises 428 residues: tRNA(Ile)-lysidine synthase (428 aa).

28 to 33 (SGGVDS) is an ATP binding site.

This sequence belongs to the tRNA(Ile)-lysidine synthase family.

It is found in the cytoplasm. The catalysed reaction is cytidine(34) in tRNA(Ile2) + L-lysine + ATP = lysidine(34) in tRNA(Ile2) + AMP + diphosphate + H(+). Functionally, ligates lysine onto the cytidine present at position 34 of the AUA codon-specific tRNA(Ile) that contains the anticodon CAU, in an ATP-dependent manner. Cytidine is converted to lysidine, thus changing the amino acid specificity of the tRNA from methionine to isoleucine. The chain is tRNA(Ile)-lysidine synthase from Streptococcus pyogenes serotype M1.